The following is a 273-amino-acid chain: Putative phosphoenolpyruvate synthase regulatory protein (273 aa).

ADP is bound at residue 153–160; the sequence is AVSRAGKT.

Belongs to the pyruvate, phosphate/water dikinase regulatory protein family. PSRP subfamily.

The catalysed reaction is [pyruvate, water dikinase] + ADP = [pyruvate, water dikinase]-phosphate + AMP + H(+). The enzyme catalyses [pyruvate, water dikinase]-phosphate + phosphate + H(+) = [pyruvate, water dikinase] + diphosphate. In terms of biological role, bifunctional serine/threonine kinase and phosphorylase involved in the regulation of the phosphoenolpyruvate synthase (PEPS) by catalyzing its phosphorylation/dephosphorylation. The protein is Putative phosphoenolpyruvate synthase regulatory protein of Stenotrophomonas maltophilia (strain R551-3).